Consider the following 145-residue polypeptide: Large-conductance mechanosensitive channel (145 aa).

A run of 2 helical transmembrane segments spans residues 30-50 and 74-94; these read VAVV…AWLM and GELV…FLII.

The protein belongs to the MscL family. In terms of assembly, homopentamer.

The protein localises to the cell inner membrane. Channel that opens in response to stretch forces in the membrane lipid bilayer. May participate in the regulation of osmotic pressure changes within the cell. The sequence is that of Large-conductance mechanosensitive channel from Synechocystis sp. (strain ATCC 27184 / PCC 6803 / Kazusa).